A 476-amino-acid polypeptide reads, in one-letter code: F-box protein At5g07670 (476 aa).

One can recognise an F-box domain in the interval 59–111 (PDFTLLLPDLILIRVIQKIPNSQRKNLSLVCKRWFRLHGRLVRSFKVSDWEFL).

The polypeptide is F-box protein At5g07670 (Arabidopsis thaliana (Mouse-ear cress)).